We begin with the raw amino-acid sequence, 585 residues long: Arginine--tRNA ligase (585 aa).

The short motif at 126-136 (PNIAKEMHVGH) is the 'HIGH' region element.

The protein belongs to the class-I aminoacyl-tRNA synthetase family. In terms of assembly, monomer.

Its subcellular location is the cytoplasm. It carries out the reaction tRNA(Arg) + L-arginine + ATP = L-arginyl-tRNA(Arg) + AMP + diphosphate. The chain is Arginine--tRNA ligase from Rippkaea orientalis (strain PCC 8801 / RF-1) (Cyanothece sp. (strain PCC 8801)).